The sequence spans 175 residues: RNA pyrophosphohydrolase (175 aa).

One can recognise a Nudix hydrolase domain in the interval 6 to 149 (GYRPNVGIIL…KRQVYQQALT (144 aa)). The short motif at 38-59 (GGIKHGESPEQAMYRELYEEVG) is the Nudix box element.

The protein belongs to the Nudix hydrolase family. RppH subfamily. A divalent metal cation is required as a cofactor.

Functionally, accelerates the degradation of transcripts by removing pyrophosphate from the 5'-end of triphosphorylated RNA, leading to a more labile monophosphorylated state that can stimulate subsequent ribonuclease cleavage. In Azoarcus sp. (strain BH72), this protein is RNA pyrophosphohydrolase.